Consider the following 254-residue polypeptide: Small ribosomal subunit protein uS2 (254 aa).

The disordered stretch occupies residues 228–254 (DRGAEKEVEAAEEAPAAEAEAAPATEE). Positions 240-254 (EAPAAEAEAAPATEE) are enriched in low complexity.

This sequence belongs to the universal ribosomal protein uS2 family.

The sequence is that of Small ribosomal subunit protein uS2 from Flavobacterium johnsoniae (strain ATCC 17061 / DSM 2064 / JCM 8514 / BCRC 14874 / CCUG 350202 / NBRC 14942 / NCIMB 11054 / UW101) (Cytophaga johnsonae).